The following is a 318-amino-acid chain: Putative fimbrium tip subunit Fim1F (318 aa).

A signal peptide spans 1-24; the sequence is MRFNVVLFMLIVALLGGLSTCSSE. The propeptide occupies 25-50; that stretch reads VPIGFDTDELSFDMSLVLLTGDMQTK.

This sequence belongs to the bacteroidetes fimbrillin superfamily. FimA/Mfa1 family. In terms of assembly, may be part of the fimbrial tip.

The protein resides in the fimbrium. Functionally, putative component of the fimbrium tip. Fimbriae are filamentous appendages on the cell surface that mediate cell adhesion and biofilm formation. This Parabacteroides distasonis (strain ATCC 8503 / DSM 20701 / CIP 104284 / JCM 5825 / NCTC 11152) protein is Putative fimbrium tip subunit Fim1F.